Reading from the N-terminus, the 143-residue chain is Hemoglobin subunit alpha-1 (143 aa).

Ser2 is subject to N-acetylserine. In terms of domain architecture, Globin spans 2-143 (SLSSKDKATV…RALALAEKYR (142 aa)). Residue His60 coordinates O2. His89 is a heme b binding site.

This sequence belongs to the globin family. As to quaternary structure, hb 1 is a heterotetramer of two alpha-1 and two beta-1 chains. Hb 3 is a heterotetramer of two alpha-1 and two beta-2 chains. Red blood cells.

Its function is as follows. Involved in oxygen transport from gills to the various peripheral tissues. The polypeptide is Hemoglobin subunit alpha-1 (hba1) (Gadus morhua (Atlantic cod)).